The sequence spans 226 residues: Cytochrome c-553I (226 aa).

Residues 1-22 (MTSKTTASLLAICVACAASAIA) form the signal peptide. A disordered region spans residues 43–68 (AAVSGDAHEQPAAEAPAEEEEETPAV). Residues C125, C128, H129, and M173 each coordinate heme. The interval 203–226 (RGRPAKREDKSDEFVAQEDSCMSG) is disordered.

Binds 1 heme group per subunit.

Its subcellular location is the periplasm. This chain is Cytochrome c-553I (cycB), found in Paracoccus denitrificans.